The primary structure comprises 230 residues: tRNA (guanine-N(1)-)-methyltransferase (230 aa).

S-adenosyl-L-methionine contacts are provided by residues glycine 114 and 138–143; that span reads IGDYVL.

It belongs to the RNA methyltransferase TrmD family. Homodimer.

Its subcellular location is the cytoplasm. The catalysed reaction is guanosine(37) in tRNA + S-adenosyl-L-methionine = N(1)-methylguanosine(37) in tRNA + S-adenosyl-L-homocysteine + H(+). In terms of biological role, specifically methylates guanosine-37 in various tRNAs. In Rhodococcus jostii (strain RHA1), this protein is tRNA (guanine-N(1)-)-methyltransferase.